Consider the following 209-residue polypeptide: High-affinity nitrate transporter 3.2 (209 aa).

A signal peptide spans 1–22; sequence MAIHTLLFVSLLIFSLIESSSG. The chain crosses the membrane as a helical span at residues 177–197; that stretch reads LDIASTFFSVFSVVSLFVFFV.

Belongs to the NAR2 family. In terms of tissue distribution, bearly detected in roots and shoots.

Its subcellular location is the cell membrane. Its function is as follows. Acts as a dual component transporter with NTR2.1. Required for high-affinity nitrate transport. The chain is High-affinity nitrate transporter 3.2 from Arabidopsis thaliana (Mouse-ear cress).